A 92-amino-acid polypeptide reads, in one-letter code: Translation initiation factor IF-1 (92 aa).

The S1-like domain occupies 1–72 (MAKEELIQFE…EKGRLIFRHK (72 aa)). The interval 69–92 (FRHKDERPGGPPRSGPPRGQFRRR) is disordered.

The protein belongs to the IF-1 family. Component of the 30S ribosomal translation pre-initiation complex which assembles on the 30S ribosome in the order IF-2 and IF-3, IF-1 and N-formylmethionyl-tRNA(fMet); mRNA recruitment can occur at any time during PIC assembly.

It is found in the cytoplasm. In terms of biological role, one of the essential components for the initiation of protein synthesis. Stabilizes the binding of IF-2 and IF-3 on the 30S subunit to which N-formylmethionyl-tRNA(fMet) subsequently binds. Helps modulate mRNA selection, yielding the 30S pre-initiation complex (PIC). Upon addition of the 50S ribosomal subunit IF-1, IF-2 and IF-3 are released leaving the mature 70S translation initiation complex. This Rhodopseudomonas palustris (strain ATCC BAA-98 / CGA009) protein is Translation initiation factor IF-1.